The chain runs to 197 residues: MQNLTVAILAGGKSSRMGQNKALLPLGTMKIIEHLVTNLRPIASELLLVANTDEYAFLNLPVYRDRFPGQGPLAGIETALRVAFNEKVYITACDLPLLPAEIPRFLAENTEDYDVTVLAYKGKIEPLIGIYRKSIYPVVEKHLILRKNKIIDFYPQVKVKIINFEQLPENLQREEFLLNVNTPADYEKLLKIFSLKE.

GTP-binding positions include Leu9–Gly11, Lys21, Asp65, and Asp94. Asp94 contributes to the Mg(2+) binding site.

It belongs to the MobA family. Mg(2+) serves as cofactor.

The protein resides in the cytoplasm. The catalysed reaction is Mo-molybdopterin + GTP + H(+) = Mo-molybdopterin guanine dinucleotide + diphosphate. Its function is as follows. Transfers a GMP moiety from GTP to Mo-molybdopterin (Mo-MPT) cofactor (Moco or molybdenum cofactor) to form Mo-molybdopterin guanine dinucleotide (Mo-MGD) cofactor. The chain is Probable molybdenum cofactor guanylyltransferase from Carboxydothermus hydrogenoformans (strain ATCC BAA-161 / DSM 6008 / Z-2901).